The chain runs to 184 residues: ATP synthase subunit b, chloroplastic (184 aa).

A helical membrane pass occupies residues 27 to 49; that stretch reads LATNLINLSVVLGVLIFFGKGVL.

The protein belongs to the ATPase B chain family. In terms of assembly, F-type ATPases have 2 components, F(1) - the catalytic core - and F(0) - the membrane proton channel. F(1) has five subunits: alpha(3), beta(3), gamma(1), delta(1), epsilon(1). F(0) has four main subunits: a(1), b(1), b'(1) and c(10-14). The alpha and beta chains form an alternating ring which encloses part of the gamma chain. F(1) is attached to F(0) by a central stalk formed by the gamma and epsilon chains, while a peripheral stalk is formed by the delta, b and b' chains.

It is found in the plastid. The protein resides in the chloroplast thylakoid membrane. In terms of biological role, f(1)F(0) ATP synthase produces ATP from ADP in the presence of a proton or sodium gradient. F-type ATPases consist of two structural domains, F(1) containing the extramembraneous catalytic core and F(0) containing the membrane proton channel, linked together by a central stalk and a peripheral stalk. During catalysis, ATP synthesis in the catalytic domain of F(1) is coupled via a rotary mechanism of the central stalk subunits to proton translocation. Functionally, component of the F(0) channel, it forms part of the peripheral stalk, linking F(1) to F(0). The polypeptide is ATP synthase subunit b, chloroplastic (Nymphaea alba (White water-lily)).